Consider the following 574-residue polypeptide: uncharacterized protein (574 aa).

The next 11 helical transmembrane spans lie at 14 to 34 (FFPT…LFFG), 54 to 74 (VVPL…LGIV), 124 to 144 (WLMA…SDTA), 205 to 225 (ICKC…TGTI), 253 to 273 (SWMA…WFIV), 323 to 343 (LVIF…VIPG), 350 to 370 (KGYV…FIWP), 403 to 423 (FPWS…AVRV), 441 to 461 (MPFF…TEFS), 485 to 505 (PLYF…LPMA), and 520 to 540 (MIDM…ITAI). Residues Asn-565 and Asn-569 are each glycosylated (N-linked (GlcNAc...) asparagine).

Belongs to the SLC13A/DASS transporter (TC 2.A.47) family. NADC subfamily.

The protein localises to the membrane. This is an uncharacterized protein from Caenorhabditis elegans.